The sequence spans 212 residues: ATP-dependent dethiobiotin synthetase BioD (212 aa).

Glycine 13–valine 18 lines the ATP pocket. Residue threonine 17 coordinates Mg(2+). Lysine 33 is a catalytic residue. A substrate-binding site is contributed by serine 37. Glutamate 100 lines the Mg(2+) pocket. ATP contacts are provided by residues glutamate 100–glycine 103 and proline 184–leucine 186.

Belongs to the dethiobiotin synthetase family. As to quaternary structure, homodimer. Mg(2+) is required as a cofactor.

It is found in the cytoplasm. It carries out the reaction (7R,8S)-7,8-diammoniononanoate + CO2 + ATP = (4R,5S)-dethiobiotin + ADP + phosphate + 3 H(+). The protein operates within cofactor biosynthesis; biotin biosynthesis; biotin from 7,8-diaminononanoate: step 1/2. Functionally, catalyzes a mechanistically unusual reaction, the ATP-dependent insertion of CO2 between the N7 and N8 nitrogen atoms of 7,8-diaminopelargonic acid (DAPA, also called 7,8-diammoniononanoate) to form a ureido ring. The polypeptide is ATP-dependent dethiobiotin synthetase BioD (Rhodopseudomonas palustris (strain TIE-1)).